The primary structure comprises 504 residues: Lysine--tRNA ligase (504 aa).

The short motif at 23 to 31 (PSGPIHIGN) is the 'HIGH' region element.

Belongs to the class-I aminoacyl-tRNA synthetase family.

It is found in the cytoplasm. It carries out the reaction tRNA(Lys) + L-lysine + ATP = L-lysyl-tRNA(Lys) + AMP + diphosphate. The polypeptide is Lysine--tRNA ligase (Picrophilus torridus (strain ATCC 700027 / DSM 9790 / JCM 10055 / NBRC 100828 / KAW 2/3)).